We begin with the raw amino-acid sequence, 239 residues long: tRNA (guanine-N(1)-)-methyltransferase (239 aa).

Residues Gly110 and 130–135 (VGDYVL) contribute to the S-adenosyl-L-methionine site.

Belongs to the RNA methyltransferase TrmD family. Homodimer.

Its subcellular location is the cytoplasm. The enzyme catalyses guanosine(37) in tRNA + S-adenosyl-L-methionine = N(1)-methylguanosine(37) in tRNA + S-adenosyl-L-homocysteine + H(+). Specifically methylates guanosine-37 in various tRNAs. The protein is tRNA (guanine-N(1)-)-methyltransferase of Borrelia turicatae (strain 91E135).